Here is a 624-residue protein sequence, read N- to C-terminus: Adenine deaminase 1 (624 aa).

Belongs to the metallo-dependent hydrolases superfamily. Adenine deaminase family. Mn(2+) serves as cofactor.

It carries out the reaction adenine + H2O + H(+) = hypoxanthine + NH4(+). The protein is Adenine deaminase 1 of Bradyrhizobium sp. (strain ORS 278).